Here is a 368-residue protein sequence, read N- to C-terminus: UPF0284 protein SYNPCC7002_A1742 (368 aa).

This sequence belongs to the UPF0284 family.

This Picosynechococcus sp. (strain ATCC 27264 / PCC 7002 / PR-6) (Agmenellum quadruplicatum) protein is UPF0284 protein SYNPCC7002_A1742.